Here is a 318-residue protein sequence, read N- to C-terminus: Transaldolase (318 aa).

The active-site Schiff-base intermediate with substrate is the Lys132.

Belongs to the transaldolase family. Type 1 subfamily. As to quaternary structure, homodimer.

The protein localises to the cytoplasm. The enzyme catalyses D-sedoheptulose 7-phosphate + D-glyceraldehyde 3-phosphate = D-erythrose 4-phosphate + beta-D-fructose 6-phosphate. The protein operates within carbohydrate degradation; pentose phosphate pathway; D-glyceraldehyde 3-phosphate and beta-D-fructose 6-phosphate from D-ribose 5-phosphate and D-xylulose 5-phosphate (non-oxidative stage): step 2/3. Transaldolase is important for the balance of metabolites in the pentose-phosphate pathway. This Shewanella sediminis (strain HAW-EB3) protein is Transaldolase.